Here is a 253-residue protein sequence, read N- to C-terminus: MRILLSNDDGVHAPGIQTLAKALRKFADVQVVAPDRNRSGASNSLTLESSLRTFTFDNGDIAVQMGTPTDCVYLGVNALMRPRPDIVVSGINAGPNLGDDVIYSGTVAAAMEGRHLGFPALAVSLNGYQHYDTAAAVTCALLRGLSREPLRTGRILNVNVPDLPLAQIKGIRVTRCGSRHPADKVIPQEDPRGNTLYWIGPPGDKYDAGLDTDFAAVDEGYVSVTPLHVDLTAHSAHDVVSDWLDSVGVGTQW.

A divalent metal cation contacts are provided by D8, D9, S39, and N92.

It belongs to the SurE nucleotidase family. A divalent metal cation serves as cofactor.

It localises to the cytoplasm. The enzyme catalyses a ribonucleoside 5'-phosphate + H2O = a ribonucleoside + phosphate. It catalyses the reaction a ribonucleoside 3'-phosphate + H2O = a ribonucleoside + phosphate. The catalysed reaction is [phosphate](n) + H2O = [phosphate](n-1) + phosphate + H(+). Functionally, nucleotidase with a broad substrate specificity as it can dephosphorylate various ribo- and deoxyribonucleoside 5'-monophosphates and ribonucleoside 3'-monophosphates with highest affinity to 3'-AMP. Also hydrolyzes polyphosphate (exopolyphosphatase activity) with the preference for short-chain-length substrates (P20-25). Might be involved in the regulation of dNTP and NTP pools, and in the turnover of 3'-mononucleotides produced by numerous intracellular RNases (T1, T2, and F) during the degradation of various RNAs. In Salmonella paratyphi A (strain AKU_12601), this protein is 5'/3'-nucleotidase SurE.